A 279-amino-acid polypeptide reads, in one-letter code: MASSASSLHFLSLTPQTLLLPKPTSQTTSLSFFSLPPSSLNLSLSSPSSCFSSRFVRKVTLPDFDQIEDVEDGDEGVEEERNFSPDLKIFVGNLLFSADSAALAELFERAGNVEMVEVIYDKLTGRSRGFGFVTMSSKEEVEAACQQFNGYELDGRALRVNSGPPPEKRENSSFRENSSFRGGSRGGGSFDSSNRVYVGNLAWGVDQDALETLFSEQGKVVDAKVVYDRDSGRSRGFGFVTYSSAEEVNNAIESLDGVDLNGRAIRVSPAEARPPRRQF.

In terms of domain architecture, RRM 1 spans 87-165; the sequence is LKIFVGNLLF…RALRVNSGPP (79 aa). The disordered stretch occupies residues 156-187; that stretch reads RALRVNSGPPPEKRENSSFRENSSFRGGSRGG. Residues 166–193 are linker (Gly-rich); sequence PEKRENSSFRENSSFRGGSRGGGSFDSS. The RRM 2 domain maps to 194–272; sequence NRVYVGNLAW…RAIRVSPAEA (79 aa).

As to expression, expressed at high levels in the leaves and seedlings, and lower levels are seen in the stems and roots.

It localises to the plastid. The protein localises to the chloroplast. Could be involved in splicing and/or processing of chloroplast RNA's. This is 30 kDa ribonucleoprotein, chloroplastic from Nicotiana plumbaginifolia (Leadwort-leaved tobacco).